The sequence spans 87 residues: U3-theraphotoxin-Hhn1n (87 aa).

The N-terminal stretch at 1-24 (MVNMKASMFLTFAGLVLLFVVCYA) is a signal peptide. Positions 25 to 52 (SESEEKEFPKEMLSSIFAVDNDFKQEER) are excised as a propeptide. Intrachain disulfides connect C54–C67, C61–C72, and C66–C79.

The protein belongs to the neurotoxin 10 (Hwtx-1) family. 51 (Hntx-8) subfamily. Hntx-8 sub-subfamily. Expressed by the venom gland.

The protein localises to the secreted. Functionally, weakly inhibits Kv11.1/KCNH2/ERG1, Kv1.2/KCNA2, Kv1.3/KCNA3, and Kv2.1/KCNB1. This is U3-theraphotoxin-Hhn1n from Cyriopagopus hainanus (Chinese bird spider).